The sequence spans 263 residues: 3-methyl-2-oxobutanoate hydroxymethyltransferase (263 aa).

Asp44 and Asp83 together coordinate Mg(2+). Residues 44-45 (DS), Asp83, and Lys113 each bind 3-methyl-2-oxobutanoate. Glu115 is a binding site for Mg(2+). The active-site Proton acceptor is the Glu183.

The protein belongs to the PanB family. In terms of assembly, homodecamer; pentamer of dimers. The cofactor is Mg(2+).

It localises to the cytoplasm. It carries out the reaction 3-methyl-2-oxobutanoate + (6R)-5,10-methylene-5,6,7,8-tetrahydrofolate + H2O = 2-dehydropantoate + (6S)-5,6,7,8-tetrahydrofolate. The protein operates within cofactor biosynthesis; (R)-pantothenate biosynthesis; (R)-pantoate from 3-methyl-2-oxobutanoate: step 1/2. Functionally, catalyzes the reversible reaction in which hydroxymethyl group from 5,10-methylenetetrahydrofolate is transferred onto alpha-ketoisovalerate to form ketopantoate. The protein is 3-methyl-2-oxobutanoate hydroxymethyltransferase of Trichodesmium erythraeum (strain IMS101).